We begin with the raw amino-acid sequence, 487 residues long: 3-octaprenyl-4-hydroxybenzoate carboxy-lyase (487 aa).

Residue Asn-172 participates in Mn(2+) binding. Prenylated FMN is bound by residues 175–177, 189–191, and 194–195; these read IYR, RWL, and RG. Glu-238 is a binding site for Mn(2+). Catalysis depends on Asp-287, which acts as the Proton donor.

The protein belongs to the UbiD family. In terms of assembly, homohexamer. Requires prenylated FMN as cofactor. It depends on Mn(2+) as a cofactor.

It is found in the cell membrane. It carries out the reaction a 4-hydroxy-3-(all-trans-polyprenyl)benzoate + H(+) = a 2-(all-trans-polyprenyl)phenol + CO2. It participates in cofactor biosynthesis; ubiquinone biosynthesis. In terms of biological role, catalyzes the decarboxylation of 3-octaprenyl-4-hydroxy benzoate to 2-octaprenylphenol, an intermediate step in ubiquinone biosynthesis. This is 3-octaprenyl-4-hydroxybenzoate carboxy-lyase from Thiobacillus denitrificans (strain ATCC 25259 / T1).